The sequence spans 443 residues: Xaa-Pro dipeptidase (443 aa).

5 residues coordinate Mn(2+): Asp246, Asp257, His339, Glu384, and Glu423.

The protein belongs to the peptidase M24B family. Bacterial-type prolidase subfamily. Mn(2+) serves as cofactor.

The catalysed reaction is Xaa-L-Pro dipeptide + H2O = an L-alpha-amino acid + L-proline. In terms of biological role, splits dipeptides with a prolyl residue in the C-terminal position. In Escherichia fergusonii (strain ATCC 35469 / DSM 13698 / CCUG 18766 / IAM 14443 / JCM 21226 / LMG 7866 / NBRC 102419 / NCTC 12128 / CDC 0568-73), this protein is Xaa-Pro dipeptidase.